The following is a 73-amino-acid chain: UPF0057 membrane protein At4g30650 (73 aa).

2 helical membrane passes run 4–24 (NMEV…GVCL) and 37–57 (LVLT…VIVF).

Belongs to the UPF0057 (PMP3) family.

It localises to the membrane. The protein is UPF0057 membrane protein At4g30650 of Arabidopsis thaliana (Mouse-ear cress).